The sequence spans 56 residues: LAPVNVDCSDHPKPACLQEQKPLCGSDNKTYDNKCSFCNAVVDSNGTLTLSHFGKC.

Positions 6 to 56 (VDCSDHPKPACLQEQKPLCGSDNKTYDNKCSFCNAVVDSNGTLTLSHFGKC) constitute a Kazal-like domain. Intrachain disulfides connect Cys-8/Cys-38, Cys-16/Cys-35, and Cys-24/Cys-56. Asn-45 carries N-linked (GlcNAc...) asparagine glycosylation.

The protein resides in the secreted. The sequence is that of Ovomucoid from Pipile pipile (Trinidad piping guan).